The primary structure comprises 340 residues: L-threonine 3-dehydrogenase (340 aa).

Position 38 (C38) interacts with Zn(2+). Catalysis depends on charge relay system residues T40 and H43. H63, E64, C93, C96, C99, and C107 together coordinate Zn(2+). NAD(+) is bound by residues I175, D195, R200, 261–263, and 285–286; these read LGI and IY.

The protein belongs to the zinc-containing alcohol dehydrogenase family. Homotetramer. Requires Zn(2+) as cofactor.

The protein localises to the cytoplasm. It catalyses the reaction L-threonine + NAD(+) = (2S)-2-amino-3-oxobutanoate + NADH + H(+). It functions in the pathway amino-acid degradation; L-threonine degradation via oxydo-reductase pathway; glycine from L-threonine: step 1/2. In terms of biological role, catalyzes the NAD(+)-dependent oxidation of L-threonine to 2-amino-3-ketobutyrate. This chain is L-threonine 3-dehydrogenase, found in Xanthomonas euvesicatoria pv. vesicatoria (strain 85-10) (Xanthomonas campestris pv. vesicatoria).